The chain runs to 572 residues: Sialate:O-sulfotransferase 1 (572 aa).

Over 1-14 the chain is Cytoplasmic; sequence MAKPFFRLQKFLRR. The chain crosses the membrane as a helical; Signal-anchor for type II membrane protein span at residues 15 to 35; sequence TQFLLLFLTAAYLMTGSLLLL. Over 36 to 572 the chain is Extracellular; it reads QRARVALPQA…AGLPREYVPR (537 aa). Asn-105 is a glycosylation site (N-linked (GlcNAc...) asparagine). WSC domains lie at 139-231 and 242-337; these read RGNY…YSVG and TATY…DTRC. Asn-254 is a glycosylation site (N-linked (GlcNAc...) asparagine).

It belongs to the WSCD family.

It localises to the golgi apparatus membrane. It catalyses the reaction a ganglioside GM1b + 3'-phosphoadenylyl sulfate = an 8-O-sulfo-ganglioside GM1b + adenosine 3',5'-bisphosphate + H(+). Its function is as follows. Sialate:O-sulfotransferase which catalyzes 8-O-sulfation at the Sia-glycan level using 3'-phosphoadenosine 5'-phosphosulfate (PAPS) as a donor, forming 8-O-sulfated Sia (Sia8S)-glycans. Displays selectivity toward glycolipids such as GM1 gangliosides. This Mus musculus (Mouse) protein is Sialate:O-sulfotransferase 1 (Wscd1).